The primary structure comprises 440 residues: MKINSIIIGAPSSSSGKTTISIGIMRALSRRLRVQPFKVGPDYIDPGYHNIATGRFSSNLDTWMSSREKMKEIFIKRSTGSDISIIEGVMGLYDGKQPDKDTGSTAEVARTLKSPVIIVIDISAMARTAAAIILGLIKMDKRLRISGVILNNAGSDYHCSIVRTAIEKYTGIPVIGCVKRSDDLKIDDRYLGLKTAMEDDNSGKIDKIADIIERSVDLDLLIKISKESGDISFKSGLFSKKNVNRVRIAIAYDAAFNFYYYDNIEMLKMYGAEIVYFSPLNDYKLPEADGLYIGGGFPELFAERLSDNYSIKKDIMEFFNSGRPVFAECGGYMYLSRGIKINGKYYEMASIINGESYMDSLILGYRNIRAESNNILMMGGWHVKGHEFHYSRLNVNANAYKTERGPDGISTKNLLAGYMHLYFPSNPRIPERFVRSCYNV.

Residues 247–428 form the GATase cobBQ-type domain; the sequence is RIAIAYDAAF…MHLYFPSNPR (182 aa). Catalysis depends on Cys329, which acts as the Nucleophile.

This sequence belongs to the CobB/CbiA family. The cofactor is Mg(2+).

The enzyme catalyses cob(II)yrinate + 2 L-glutamine + 2 ATP + 2 H2O = cob(II)yrinate a,c diamide + 2 L-glutamate + 2 ADP + 2 phosphate + 2 H(+). The protein operates within cofactor biosynthesis; adenosylcobalamin biosynthesis; cob(II)yrinate a,c-diamide from sirohydrochlorin (anaerobic route): step 10/10. In terms of biological role, catalyzes the ATP-dependent amidation of the two carboxylate groups at positions a and c of cobyrinate, using either L-glutamine or ammonia as the nitrogen source. This is Cobyrinate a,c-diamide synthase from Picrophilus torridus (strain ATCC 700027 / DSM 9790 / JCM 10055 / NBRC 100828 / KAW 2/3).